Reading from the N-terminus, the 395-residue chain is MPKVLVMNAGSSSHKLSLFSDKIENAGSALWKAHIEWGKKNPSYTLKNGSQESNPIYLQTTSVKQGIQEVIEKLWIGDFAVIKEVHEIEWIGHRVVHGGSLFHQPVLINASVKKDISNLSSLAPLHNPINLEGIELLEKIFPSIPHFAVFDTAFHRTMREEIKTYPIPYEWKEKGIERYGFHGISHSYCAKQIKKWIKPQETPFKLINCHLGNGASLCAIRDGFSIDTTMGFTPMEGLMMGTRSGSIDPGILIYCLRNKNLSLEELDHLLNFESGLKGIGGTSDMREIHAFKNKQSQLALDMYIYRLKTGIGAMTASLGGIDALCFTGGIGENDSYLRKKTCEELAYLGIQLDLQKNQGGNQDKEISLHDSPVKVFVIHTQEEWMIAKSCLEYLT.

N8 provides a ligand contact to Mg(2+). K15 provides a ligand contact to ATP. R94 is a binding site for substrate. D151 functions as the Proton donor/acceptor in the catalytic mechanism. Residues 210 to 214 (HLGNG), 284 to 286 (DMR), and 329 to 333 (GIGEN) each bind ATP. Mg(2+) is bound at residue E382.

This sequence belongs to the acetokinase family. Homodimer. It depends on Mg(2+) as a cofactor. Requires Mn(2+) as cofactor.

Its subcellular location is the cytoplasm. It carries out the reaction acetate + ATP = acetyl phosphate + ADP. Its pathway is metabolic intermediate biosynthesis; acetyl-CoA biosynthesis; acetyl-CoA from acetate: step 1/2. Its function is as follows. Catalyzes the formation of acetyl phosphate from acetate and ATP. Can also catalyze the reverse reaction. The sequence is that of Acetate kinase from Protochlamydia amoebophila (strain UWE25).